Reading from the N-terminus, the 530-residue chain is Tryptophan 7-halogenase RebH (530 aa).

Residues glycine 13, threonine 15, alanine 16, alanine 39, aspartate 41, glutamate 49, and alanine 50 each contribute to the FAD site. Residue lysine 79 is part of the active site. Residues valine 197 and threonine 348 each coordinate FAD. Glutamate 357 contributes to the L-tryptophan binding site. Residues threonine 359 and glycine 360 each coordinate chloride. An FAD-binding site is contributed by isoleucine 361. Residues tyrosine 454, tyrosine 455, glutamate 461, and phenylalanine 465 each coordinate L-tryptophan.

Belongs to the flavin-dependent halogenase family. Bacterial tryptophan halogenase subfamily. In terms of assembly, homodimer.

It carries out the reaction L-tryptophan + FADH2 + chloride + O2 = 7-chloro-L-tryptophan + FAD + 2 H2O. Its function is as follows. Involved in the biosynthesis of the indolocarbazole antitumor agent rebeccamycin. Catalyzes the chlorination of tryptophan (Trp) at C7 position to yield 7-chlorotryptophan. It is also able to use bromide ions to generate monobrominated Trp. The protein is Tryptophan 7-halogenase RebH (rebH) of Lentzea aerocolonigenes (Lechevalieria aerocolonigenes).